The primary structure comprises 303 residues: Glycine--tRNA ligase alpha subunit (303 aa).

Belongs to the class-II aminoacyl-tRNA synthetase family. In terms of assembly, tetramer of two alpha and two beta subunits.

The protein resides in the cytoplasm. It carries out the reaction tRNA(Gly) + glycine + ATP = glycyl-tRNA(Gly) + AMP + diphosphate. The protein is Glycine--tRNA ligase alpha subunit of Klebsiella pneumoniae subsp. pneumoniae (strain ATCC 700721 / MGH 78578).